A 379-amino-acid chain; its full sequence is Cytochrome b (379 aa).

Transmembrane regions (helical) follow at residues 33–53 (FGSLLGMCLMIQILTGLFLAM), 77–98 (WLIRYLHANGASMFFICLFIHV), 113–133 (WNIGIILFLTTMATAFVGYVL), and 178–198 (FFAFHFILPFIITAFALVHLL). 2 residues coordinate heme b: His83 and His97. 2 residues coordinate heme b: His182 and His196. Residue His201 participates in a ubiquinone binding. 4 consecutive transmembrane segments (helical) span residues 226–246 (TKDLLGIFLLLLVLMILALFF), 288–308 (LGGVLALVLSILILAAFPLLN), 320–340 (ITQVIYWIFIXNLLVLTWIGG), and 347–367 (XTMIGQIASITYFAIIIILIP).

It belongs to the cytochrome b family. The cytochrome bc1 complex contains 11 subunits: 3 respiratory subunits (MT-CYB, CYC1 and UQCRFS1), 2 core proteins (UQCRC1 and UQCRC2) and 6 low-molecular weight proteins (UQCRH/QCR6, UQCRB/QCR7, UQCRQ/QCR8, UQCR10/QCR9, UQCR11/QCR10 and a cleavage product of UQCRFS1). This cytochrome bc1 complex then forms a dimer. Heme b serves as cofactor.

It localises to the mitochondrion inner membrane. Its function is as follows. Component of the ubiquinol-cytochrome c reductase complex (complex III or cytochrome b-c1 complex) that is part of the mitochondrial respiratory chain. The b-c1 complex mediates electron transfer from ubiquinol to cytochrome c. Contributes to the generation of a proton gradient across the mitochondrial membrane that is then used for ATP synthesis. The polypeptide is Cytochrome b (MT-CYB) (Akodon boliviensis (Bolivian grass mouse)).